A 148-amino-acid chain; its full sequence is Histone H2A-like 3 (148 aa).

The disordered stretch occupies residues 101 to 128 (DDTHSQVEEMPQSEEEEEEEEEKEEEMV). Residues 111-127 (PQSEEEEEEEEEKEEEM) show a composition bias toward acidic residues.

The protein belongs to the histone H2A family. As to quaternary structure, the nucleosome is a histone octamer containing two molecules each of H2A, H2B, H3 and H4 assembled in one H3-H4 heterotetramer and two H2A-H2B heterodimers. The octamer wraps approximately 147 bp of DNA.

Its subcellular location is the nucleus. It localises to the chromosome. In terms of biological role, core component of nucleosome. Nucleosomes wrap and compact DNA into chromatin, limiting DNA accessibility to the cellular machineries which require DNA as a template. Histones thereby play a central role in transcription regulation, DNA repair, DNA replication and chromosomal stability. DNA accessibility is regulated via a complex set of post-translational modifications of histones, also called histone code, and nucleosome remodeling. This Homo sapiens (Human) protein is Histone H2A-like 3.